A 675-amino-acid polypeptide reads, in one-letter code: Vitamin K-dependent protein S (675 aa).

The N-terminal stretch at 1–24 (MRVLSVRFRVLLACLALVLPNSET) is a signal peptide. Residues 25–41 (NFLSKERASQVLVRKRR) constitute a propeptide that is removed on maturation. The Gla domain maps to 42–87 (ANTLLEETKKGNLERECIEELCNKEEAREVFENNPETDYFYPKYLG). 4-carboxyglutamate is present on residues Glu-47, Glu-48, Glu-55, Glu-57, Glu-60, Glu-61, Glu-66, Glu-67, Glu-70, Glu-73, and Glu-77. Residues Cys-58 and Cys-63 are joined by a disulfide bond. Residues 88 to 116 (CLGAFRVGAFSAARQSANAYPDLRSCVNA) are thrombin-sensitive. The EGF-like 1 domain occupies 117-155 (IPDQCDPMPCNEDGYLSCKDGQGAFTCICKPGWQGDKCQ). 13 cysteine pairs are disulfide-bonded: Cys-121-Cys-134, Cys-126-Cys-143, Cys-145-Cys-154, Cys-161-Cys-175, Cys-171-Cys-184, Cys-186-Cys-199, Cys-205-Cys-217, Cys-212-Cys-226, Cys-228-Cys-241, Cys-247-Cys-256, Cys-252-Cys-265, Cys-267-Cys-282, and Cys-449-Cys-475. At Asp-136 the chain carries (3R)-3-hydroxyaspartate. Positions 157–200 (DINECKDPSNINGGCSQTCDNTPGSYHCSCKIGFAMLTNKKDCK) constitute an EGF-like 2; calcium-binding domain. An EGF-like 3; calcium-binding domain is found at 201–242 (DVDECSLKPSVCGTAVCKNIPGDFECECPNGYRYDPSSKSCK). The EGF-like 4; calcium-binding domain maps to 243-283 (DVDECSENTCAQLCVNYPGGYSCYCDGKKGFKLAQDQRSCE). 2 consecutive Laminin G-like domains span residues 299–475 (LLYL…NKHC) and 484–665 (YYPG…AHSC). Asn-499 and Asn-509 each carry an N-linked (GlcNAc...) asparagine glycan.

The iron and 2-oxoglutarate dependent 3-hydroxylation of aspartate and asparagine is (R) stereospecific within EGF domains. Plasma.

Its subcellular location is the secreted. Anticoagulant plasma protein; it is a cofactor to activated protein C in the degradation of coagulation factors Va and VIIIa. It helps to prevent coagulation and stimulating fibrinolysis. The protein is Vitamin K-dependent protein S (Pros1) of Rattus norvegicus (Rat).